A 190-amino-acid polypeptide reads, in one-letter code: uncharacterized protein (190 aa).

The helical transmembrane segment at 12–34 (LLGLSIFLTTFLFVANFLPGIFA) threads the bilayer.

It is found in the membrane. This is an uncharacterized protein from Archaeoglobus fulgidus (strain ATCC 49558 / DSM 4304 / JCM 9628 / NBRC 100126 / VC-16).